Here is a 252-residue protein sequence, read N- to C-terminus: Hydroxyacylglutathione hydrolase (252 aa).

Zn(2+)-binding residues include His-54, His-56, Asp-58, His-59, His-111, Asp-128, and His-166.

The protein belongs to the metallo-beta-lactamase superfamily. Glyoxalase II family. Monomer. Requires Zn(2+) as cofactor.

It carries out the reaction an S-(2-hydroxyacyl)glutathione + H2O = a 2-hydroxy carboxylate + glutathione + H(+). The protein operates within secondary metabolite metabolism; methylglyoxal degradation; (R)-lactate from methylglyoxal: step 2/2. Its function is as follows. Thiolesterase that catalyzes the hydrolysis of S-D-lactoyl-glutathione to form glutathione and D-lactic acid. The sequence is that of Hydroxyacylglutathione hydrolase from Aliivibrio fischeri (strain MJ11) (Vibrio fischeri).